The sequence spans 360 residues: MYDYILNALVKIEAYLDNESDSVEIPNNLFKTDILVDYYYYPGHFVDVDDDEKELIAATLTDAGYADHYDALAELLWKANIEPIPKEELVDGNSYCFIMISFGITPVQAHLKAKKAKYEQVTFFCLPYTDREGEQRFKILVVPNTFGSIFKEMKCACLLDIESEEQLDKTYWSLLERAIGQICQTLSIDVTGFALSDTTYQQKTLETYSPYLTQFCQLTQIQNIEGFKARWLEIQQQQKQLIQQVKDEGFYGTVKPAFLNYRFLLCEFLTSTYEDHWQMDYDALFDYLAKYLEQPFELDEEDGLQPNDIARKVEAESNYSLLDIETRLESYCFLPCLKTDVESILNLAEILDFPMSKLGD.

This sequence to P.multocida PM1082.

This is an uncharacterized protein from Pasteurella multocida (strain Pm70).